A 395-amino-acid polypeptide reads, in one-letter code: Protein RIF2 (395 aa).

In terms of assembly, interacts with RIF1 and RAP1 C-terminus.

It is found in the nucleus. The protein resides in the chromosome. Its subcellular location is the telomere. Functionally, involved in transcriptional silencing and telomere length regulation. Its role in telomere length regulation results from either a block in elongation or promoting degradation of the telomere ends. Loss of RIF1 function results in derepression of an HMR silencer, whose ARS consensus element has been deleted, and in the elongation of telomeres. RAP1 may target the binding of RIF1 to silencers and telomeres. The sequence is that of Protein RIF2 (RIF2) from Saccharomyces cerevisiae (strain ATCC 204508 / S288c) (Baker's yeast).